The primary structure comprises 376 residues: MFRHGVRTFATTSLRRMAAVAPQEPSQYLLNVSKAQGIAKGLTGAIGNTPLIRLNRLSEETGCEILGKAEFMNPGGSVKDRAALYVVKDAEERGLLRPGGTVVEGTAGNTGIGLAHVCRSKGYKLVIYMPNTQSQGKIDLLRLLGAEVYPVPAVAFENPENYNHQARRHAERLDNAVWTNQFDNIANRRAHIETTGPEIWAQTGGKVDAFTCATGTGGTFAGTTRYLKEVSGGRVKAFLADPPGSVLHSYFSSGGKLIERSGSSITEGIGQGRITDNLKQDVDLVDGSMTISDEKTIEMVYRCLDEEGLYLGASSTLNVVAAKEVAEKLGKGSTVVTMLCDGAYRYADRLFSRKWLEQKNLLGAIPEHLQKYIVLP.

A mitochondrion-targeting transit peptide spans M1–R16. K79 carries the N6-(pyridoxal phosphate)lysine modification. Pyridoxal 5'-phosphate contacts are provided by residues N109, G215–T219, and S314.

Belongs to the cysteine synthase/cystathionine beta-synthase family. Pyridoxal 5'-phosphate is required as a cofactor.

It is found in the mitochondrion. The catalysed reaction is O-succinyl-L-serine + hydrogen sulfide = L-cysteine + succinate. It catalyses the reaction O-acetyl-L-serine + hydrogen sulfide = L-cysteine + acetate. It participates in amino-acid biosynthesis; L-cysteine biosynthesis; L-cysteine from L-serine: step 2/2. Its function is as follows. Catalyzes the conversion of O-succinyl-L-serine into cysteine, the last step in the cysteine biosynthesis pathway. Can also use O-acetyl-L-serine. The chain is Cysteine synthase 1 (cys-17) from Neurospora crassa (strain ATCC 24698 / 74-OR23-1A / CBS 708.71 / DSM 1257 / FGSC 987).